A 1857-amino-acid chain; its full sequence is Chitin synthase Y (1857 aa).

The tract at residues 1–22 is disordered; sequence MVGPSPAGTVPSHAQSSLPSLP. Positions 1–788 constitute a Myosin motor domain; that stretch reads MVGPSPAGTV…CWADLAKVGE (788 aa). An ATP-binding site is contributed by 102-109; it reads GESGAGKT. The disordered stretch occupies residues 601 to 653; sequence SSKPLRMPSMARRKASPASRLTFDAPTAEEPEDNESYGGSTAKSSGRRKSAMS. N-linked (GlcNAc...) asparagine glycosylation occurs at Asn634. The interval 668 to 692 is actin-binding; that stretch reads LEIVNKCLSSPSLNPYFIFCLKPND. Transmembrane regions (helical) follow at residues 898-918 and 937-957; these read WMAIVWLLTFYIPDFAIRLFG and LIIWFSCAVAIFFIVAFPGLV. A Cytochrome b5 heme-binding domain is found at 961–1020; sequence QHVYSAAELESHNGKNGHDSYIAIRGVVFDLDKFMPRHYPDIVPQSSLKKYAGMDATGLF. Residues Asn1047 and Asn1072 are each glycosylated (N-linked (GlcNAc...) asparagine). A helical transmembrane segment spans residues 1209 to 1229; the sequence is FILAISILICAVVIFKFAAAL. Residue Asn1572 is glycosylated (N-linked (GlcNAc...) asparagine). A run of 3 helical transmembrane segments spans residues 1603 to 1623, 1630 to 1650, and 1657 to 1677; these read LLSTCIQPVSLAYIIYLIVWL, IPWTSFVLIAAIYGLQALIFI, and MIGWMIVYLLAMPIFSVALPF. The DEK-C domain maps to 1799-1854; it reads LPSDDAILAEIREILRTADLMTVTKKSIKQELERRFGVNLDAKRPYINSATEAVLS.

It in the N-terminal section; belongs to the TRAFAC class myosin-kinesin ATPase superfamily. Myosin family. The protein in the C-terminal section; belongs to the chitin synthase family. Class V subfamily.

The protein resides in the cell membrane. The protein localises to the cell septum. It is found in the cell tip. It catalyses the reaction [(1-&gt;4)-N-acetyl-beta-D-glucosaminyl](n) + UDP-N-acetyl-alpha-D-glucosamine = [(1-&gt;4)-N-acetyl-beta-D-glucosaminyl](n+1) + UDP + H(+). In terms of biological role, polymerizes chitin, a structural polymer of the cell wall and septum, by transferring the sugar moiety of UDP-GlcNAc to the non-reducing end of the growing chitin polymer. Specifically involved in hyphal elongation and new cell wall formation. The chain is Chitin synthase Y from Aspergillus oryzae (strain ATCC 42149 / RIB 40) (Yellow koji mold).